The following is a 370-amino-acid chain: Chaperone protein DnaJ (370 aa).

The region spanning 7–73 is the J domain; it reads DYYEILGVPR…QKRAMYDRFG (67 aa). A CR-type zinc finger spans residues 144–226; that stretch reads GTEIPIEYER…CGGSGRVLRR (83 aa). Residues Cys-157, Cys-160, Cys-174, Cys-177, Cys-200, Cys-203, Cys-214, and Cys-217 each coordinate Zn(2+). CXXCXGXG motif repeat units lie at residues 157–164, 174–181, 200–207, and 214–221; these read CPRCGGTG, CDECGGTG, and CHECGGSG.

It belongs to the DnaJ family. In terms of assembly, homodimer. Zn(2+) is required as a cofactor.

It is found in the cytoplasm. Participates actively in the response to hyperosmotic and heat shock by preventing the aggregation of stress-denatured proteins and by disaggregating proteins, also in an autonomous, DnaK-independent fashion. Unfolded proteins bind initially to DnaJ; upon interaction with the DnaJ-bound protein, DnaK hydrolyzes its bound ATP, resulting in the formation of a stable complex. GrpE releases ADP from DnaK; ATP binding to DnaK triggers the release of the substrate protein, thus completing the reaction cycle. Several rounds of ATP-dependent interactions between DnaJ, DnaK and GrpE are required for fully efficient folding. Also involved, together with DnaK and GrpE, in the DNA replication of plasmids through activation of initiation proteins. The chain is Chaperone protein DnaJ from Thermotoga neapolitana (strain ATCC 49049 / DSM 4359 / NBRC 107923 / NS-E).